The sequence spans 65 residues: Large ribosomal subunit protein bL35 (65 aa).

This sequence belongs to the bacterial ribosomal protein bL35 family.

In Yersinia enterocolitica serotype O:8 / biotype 1B (strain NCTC 13174 / 8081), this protein is Large ribosomal subunit protein bL35.